Consider the following 92-residue polypeptide: uncharacterized protein (92 aa).

Residues 1–10 (MGLLKKKDST) are compositionally biased toward basic and acidic residues. The segment at 1 to 21 (MGLLKKKDSTSARSSTSPCAD) is disordered. One can recognise a CHCH domain in the interval 16 to 66 (TSPCADLRNAYHNCFNKWYSEKFVKGQWDKEECVAEWKKYRDCLSENLDGK). 2 consecutive short sequence motifs (cx9C motif) follow at residues 19-29 (CADLRNAYHNC) and 48-58 (CVAEWKKYRDC). 2 disulfides stabilise this stretch: cysteine 19–cysteine 58 and cysteine 29–cysteine 48.

The protein belongs to the TRIAP1/MDM35 family.

This is an uncharacterized protein from Arabidopsis thaliana (Mouse-ear cress).